Here is a 269-residue protein sequence, read N- to C-terminus: Energy-coupling factor transporter ATP-binding protein EcfA1 (269 aa).

Residues 8–242 form the ABC transporter domain; it reads IVFKNVSFQY…AEGLTTIGLD (235 aa). 42–49 is a binding site for ATP; it reads GHNGSGKS.

Belongs to the ABC transporter superfamily. Energy-coupling factor EcfA family. As to quaternary structure, forms a stable energy-coupling factor (ECF) transporter complex composed of 2 membrane-embedded substrate-binding proteins (S component), 2 ATP-binding proteins (A component) and 2 transmembrane proteins (T component).

It localises to the cell membrane. ATP-binding (A) component of a common energy-coupling factor (ECF) ABC-transporter complex. Unlike classic ABC transporters this ECF transporter provides the energy necessary to transport a number of different substrates. In Staphylococcus aureus (strain bovine RF122 / ET3-1), this protein is Energy-coupling factor transporter ATP-binding protein EcfA1.